We begin with the raw amino-acid sequence, 202 residues long: Probable 1-Cys peroxiredoxin (202 aa).

The Thioredoxin domain occupies 1 to 148 (STHGKIRIHD…VVRAVDSLLT (148 aa)). C30 acts as the Cysteine sulfenic acid (-SOH) intermediate in catalysis. A Bipartite nuclear localization signal motif is present at residues 178–201 (KKLFPQGFETKDLPSKKGYLRFTK).

The protein belongs to the peroxiredoxin family. Prx6 subfamily. In terms of tissue distribution, embryos.

It localises to the nucleus. The protein localises to the cytoplasm. It carries out the reaction a hydroperoxide + [thioredoxin]-dithiol = an alcohol + [thioredoxin]-disulfide + H2O. Functionally, thiol-specific peroxidase that catalyzes the reduction of hydrogen peroxide and organic hydroperoxides to water and alcohols, respectively. Seems to contribute to the inhibition of germination during stress. The sequence is that of Probable 1-Cys peroxiredoxin from Bromus secalinus (Rye brome).